The sequence spans 727 residues: MPDPSTYRPATGTIPVDPGVYKFRDPHGRVIYVGKAKSLRSRLNSYFADVSTLHPRTRQMVTTAGSVEWTVVSTEVEALQLEYNWIKEFDPRFNVRYRDDKTYPVLAVTLNEEYPRLFVYRGPRRKGVRYFGPYSHAWAIRETLDLLLRVFPARTCSAGVFKRHNQIGRPCLLGYIDKCSAPCVGRVSAAEHRKIVEDFCDFLSGRTDRLVRQLEARMQEASEELDFETAARLRDDVGALRRALEKQAVVLGDGTDADVAAFATDELEAAVQVFHVRGGRVRGQRGWVVEKAGDVIDWASVDSEAGSDLPLLVEQFLTQFYGEQAALSGATDQEAGTSGVPREVLVPVLPPDAEQVQEWLSGLRGSAVRLRVPQRGDKKALAETVQRNATEALQQHKLRRAGDFTSRSAALQGIQEALDLDSAPLRIECVDISHVQGTDVVASLVVFEDGLPRKSDYRHYAIKEAAGDGRSDDVASIAEVTRRRFLRHNRDVGVLRAEAAGADADQVSGGDGGDLAPEAAIDPQTGRPRRFAYPPNLFVVDGGAPQVAAASAVLDELGITDVAVIGLAKRLEEVWVPGEEDPVILPRTSESLYLLQRVRDEAHRFAITFHRSKRSRRMTASALDSVRGLGETRRKALVTHFGSVARLKQASVEEITAVPGIGTATAKAVLTALGAEEPSADVVGVGDDEPDRNGPGTAERNGADIPREPVEQHGPAAQSASQRTGVE.

Residues 16–95 (VDPGVYKFRD…IKEFDPRFNV (80 aa)) form the GIY-YIG domain. The UVR domain maps to 208 to 243 (DRLVRQLEARMQEASEELDFETAARLRDDVGALRRA). Disordered stretches follow at residues 503-527 (DADQVSGGDGGDLAPEAAIDPQTGR) and 679-727 (SADV…TGVE). Residues 701–711 (NGADIPREPVE) show a composition bias toward basic and acidic residues. Positions 718–727 (QSASQRTGVE) are enriched in polar residues.

The protein belongs to the UvrC family. As to quaternary structure, interacts with UvrB in an incision complex.

It localises to the cytoplasm. The UvrABC repair system catalyzes the recognition and processing of DNA lesions. UvrC both incises the 5' and 3' sides of the lesion. The N-terminal half is responsible for the 3' incision and the C-terminal half is responsible for the 5' incision. The sequence is that of UvrABC system protein C from Rhodococcus jostii (strain RHA1).